The primary structure comprises 228 residues: Protein-L-isoaspartate O-methyltransferase (228 aa).

A disordered region spans residues 1–20 (MVAVSLKMSQPAAPPPPMGE). S76 is a catalytic residue.

Belongs to the methyltransferase superfamily. L-isoaspartyl/D-aspartyl protein methyltransferase family.

Its subcellular location is the cytoplasm. It catalyses the reaction [protein]-L-isoaspartate + S-adenosyl-L-methionine = [protein]-L-isoaspartate alpha-methyl ester + S-adenosyl-L-homocysteine. Its function is as follows. Catalyzes the methyl esterification of L-isoaspartyl residues in peptides and proteins that result from spontaneous decomposition of normal L-aspartyl and L-asparaginyl residues. It plays a role in the repair and/or degradation of damaged proteins. The protein is Protein-L-isoaspartate O-methyltransferase of Magnetococcus marinus (strain ATCC BAA-1437 / JCM 17883 / MC-1).